The chain runs to 163 residues: Shikimate kinase (163 aa).

ATP is bound at residue 10 to 15 (GVGKTT). T14 is a binding site for Mg(2+). D28, R52, and G75 together coordinate substrate. R116 contributes to the ATP binding site. R134 serves as a coordination point for substrate. R151 serves as a coordination point for ATP.

Belongs to the shikimate kinase family. As to quaternary structure, monomer. Mg(2+) serves as cofactor.

Its subcellular location is the cytoplasm. It catalyses the reaction shikimate + ATP = 3-phosphoshikimate + ADP + H(+). The protein operates within metabolic intermediate biosynthesis; chorismate biosynthesis; chorismate from D-erythrose 4-phosphate and phosphoenolpyruvate: step 5/7. In terms of biological role, catalyzes the specific phosphorylation of the 3-hydroxyl group of shikimic acid using ATP as a cosubstrate. In Streptococcus pyogenes serotype M49 (strain NZ131), this protein is Shikimate kinase.